A 1520-amino-acid polypeptide reads, in one-letter code: Integrator complex subunit 3 homolog (1520 aa).

Disordered regions lie at residues 1 to 23, 523 to 671, 689 to 801, 813 to 922, 1116 to 1177, and 1489 to 1520; these read MMNQQQQQQQPPTTSPTQQQQLT, QLHS…NSRV, VISQ…SPST, DEPP…QNIK, FSNS…NITN, and QSSNIKNDNNPTLSKHQNSDDDSNPKKRFRKE. Composition is skewed to low complexity over residues 527–549 and 557–595; these read QQQQLQQQQLQQPQQPQQQQQPP and QPINKQLPLQMSPQQQSQQQLQQQQLQQQLQQQQQQQQP. Residues 596–612 show a composition bias toward pro residues; sequence PQQPPPQQQPQQQPPQQ. A compositionally biased stretch (low complexity) spans 613 to 625; it reads QPQQQPQQQQPQL. Polar residues predominate over residues 626-639; it reads NISTGNLPNIQQPM. 3 stretches are compositionally biased toward low complexity: residues 642 to 669, 694 to 717, and 725 to 735; these read SPPLSSNTLVSPTSSSSPTSSNLPTNNS, PQSQQTPSLHSSSQSVLQQKSPPL, and QQQPSQQLPSQ. Over residues 736–752 the composition is skewed to polar residues; sequence IVKNSPPNLSMTNENIS. Residues 768–789 show a composition bias toward low complexity; that stretch reads SPLINSSNSNITTPNPDSQSQI. The span at 819–828 shows a compositional bias: polar residues; it reads SKSSPTQSNI. Residues 837 to 882 are compositionally biased toward low complexity; it reads PPQTTISSSSPLLQPQTQPQPQTQPQPQTLQQSTTPSLSSSSTPTI. The span at 898-918 shows a compositional bias: pro residues; it reads QPPPPPPSSQPLQPPPPPPPS. Composition is skewed to low complexity over residues 1116–1130 and 1137–1177; these read FSNSDDNESTNNNNN and QQQQ…NITN. Over residues 1489-1504 the composition is skewed to polar residues; the sequence is QSSNIKNDNNPTLSKH.

This sequence belongs to the Integrator subunit 3 family. Component of the Integrator complex. The core complex associates with protein phosphatase 2A subunits, to form the Integrator-PP2A (INTAC) complex. Component of the SOSS complex.

The protein resides in the nucleus. It localises to the cytoplasm. Functionally, component of the integrator complex, a multiprotein complex that terminates RNA polymerase II (Pol II) transcription in the promoter-proximal region of genes. The integrator complex provides a quality checkpoint during transcription elongation by driving premature transcription termination of transcripts that are unfavorably configured for transcriptional elongation: the complex terminates transcription by (1) catalyzing dephosphorylation of the C-terminal domain (CTD) of Pol II subunit polr2a, (2) degrading the exiting nascent RNA transcript via endonuclease activity and (3) promoting the release of Pol II from bound DNA. The integrator complex is also involved in terminating the synthesis of non-coding Pol II transcripts, such as enhancer RNAs (eRNAs), small nuclear RNAs (snRNAs), telomerase RNAs and long non-coding RNAs (lncRNAs). In terms of biological role, component of the SOSS complex, a multiprotein complex that functions downstream of the MRN complex to promote DNA repair and G2/M checkpoint. The SOSS complex associates with single-stranded DNA at DNA lesions and influences diverse endpoints in the cellular DNA damage response including cell-cycle checkpoint activation, recombinational repair and maintenance of genomic stability. The SOSS complex is required for efficient homologous recombination-dependent repair of double-strand breaks (DSBs) and ATM-dependent signaling pathways. In the SOSS complex, it is required for the assembly of the complex and for stabilization of the complex at DNA damage sites. The sequence is that of Integrator complex subunit 3 homolog (ints3) from Dictyostelium discoideum (Social amoeba).